Consider the following 1077-residue polypeptide: MVPYFEMAAASNFSFLCGASHPQELVERAHALDLSGIGIADRNTLAGVVRAHAQWKDIRKESGFRLFIGCRLSFIDGTPDMVVYPRDRAAYGQLCRLLTEGKHRAAIKGECHLEWADLLFRARQFQIAVFPPDEDEPDFAARLTEIAQAAPGSVWLALTMPHQGQDGRRAERIARFAAQAGVPLIATNDVLYHHPDRRPLQDVLTATRHHTTVFAAGRLLEKNAERHLKPPHEMVRLFRDYPEAIAATADFVAPITFQLDELKYAYPDEPIPPGKTAQQHLYDLVWEGAARHYGADMIPPKVQGLINKELALIARLEYEPYFLTVYDIVTHAREKGILCQGRGSAANSVVCFCLGITGVNPTQVDLLFERFISAERKEPPDIDVDFEHERREEVMQYVYDRYSRDRAAIVATVISYRSRSAIRDVGKALGLSEDVTAALANTVWGLSGGGIDRQHIRQAGLDPDNPIIQRAVELAITLIGFPRHLSQHVGGFVLTRDRLDETVPIGPAAMDKRSFIEWDKDDIDEVGLMKVDVLSLGMLTCIRKAFDLIHQHKPQLYGGEKLTLASLPRKDKAVYDMLCKGDSLGVFQVESRAQMNMLPRLRPQEFYDLVIEVAIVRPGPIQGDMVHPYLRRRSGQEPCTLPSPSPQHGPANELQQILGKTKGVPLFQEQAMRIAMEAAKFTPEEANQLRRAMATFRKMGTIHTMEKKMIDGMVNRGYDRTFAENCFNQIKGFGEYGFPESHAASFAHLVYISAWLKCHHPEVFAAALLNSQPMGFYAPAQIVRDAREHGVTVLPVDVNFSQWDNILEETPDVHLALRLGFRQIDGFSKRDTELLIADRQEPYRTIEDMHRRLRLDRRAFTLLADADAFGSLDIDRRAALWAVRRLPNDETLPLFRAAAASELAQEPRTKLPEMAASEHVIADYETTRLSLKGHPLQYLREGLAAEGVSTCRAVQEGADGRRMKVAGVVTVRQRPGSAKGVVFLTIEDETGIANIVIWPKIMKVFRREVMSARLIHIEGRIQRSLEGVVHLVAAKLQDRSAALIEMSGREAQRLIAPSQMAHHPRNVRVMPNSRDFH.

This sequence belongs to the DNA polymerase type-C family. DnaE2 subfamily.

The protein resides in the cytoplasm. The catalysed reaction is DNA(n) + a 2'-deoxyribonucleoside 5'-triphosphate = DNA(n+1) + diphosphate. Functionally, DNA polymerase involved in damage-induced mutagenesis and translesion synthesis (TLS). It is not the major replicative DNA polymerase. This is Error-prone DNA polymerase from Brucella abortus biovar 1 (strain 9-941).